Here is a 138-residue protein sequence, read N- to C-terminus: ER-derived vesicles protein ERV14 (138 aa).

Residues 2–6 (GAWLF) are Cytoplasmic-facing. The chain crosses the membrane as a helical span at residues 7 to 27 (ILAVVVNCINLFGQVHFTILY). The Extracellular segment spans residues 28–52 (ADLEADYINPIELCSKVNKLITPEA). Residues 53–73 (ALHGALSLLFLLNGYWFVFLL) traverse the membrane as a helical segment. Topologically, residues 74-111 (NLPVLAYNLNKIYNKVQLLDATEIFRTLGKHKRESFLK) are cytoplasmic. The helical transmembrane segment at 112-132 (LGFHLLMFFFYLYRMIMALIA) threads the bilayer. At 133-138 (ESGDDF) the chain is on the extracellular side.

The protein belongs to the cornichon family.

It localises to the endoplasmic reticulum membrane. It is found in the golgi apparatus membrane. Functionally, could regulate export of the bud site and axial growth sites selection protein AXL2 and possibly other secretory proteins from the endoplasmic reticulum in COPII-coated vesicles. Seems to be required for axial budding pattern in haploid cells. The sequence is that of ER-derived vesicles protein ERV14 (ERV14) from Saccharomyces cerevisiae (strain ATCC 204508 / S288c) (Baker's yeast).